Reading from the N-terminus, the 253-residue chain is Triosephosphate isomerase (253 aa).

9-11 (NWK) is a substrate binding site. Catalysis depends on H96, which acts as the Electrophile. The Proton acceptor role is filled by E168. Substrate is bound by residues G174, S213, and 234-235 (GG).

It belongs to the triosephosphate isomerase family. Homodimer.

It localises to the cytoplasm. The enzyme catalyses D-glyceraldehyde 3-phosphate = dihydroxyacetone phosphate. Its pathway is carbohydrate biosynthesis; gluconeogenesis. The protein operates within carbohydrate degradation; glycolysis; D-glyceraldehyde 3-phosphate from glycerone phosphate: step 1/1. In terms of biological role, involved in the gluconeogenesis. Catalyzes stereospecifically the conversion of dihydroxyacetone phosphate (DHAP) to D-glyceraldehyde-3-phosphate (G3P). This chain is Triosephosphate isomerase, found in Hydrogenovibrio crunogenus (strain DSM 25203 / XCL-2) (Thiomicrospira crunogena).